Consider the following 266-residue polypeptide: 3-deoxy-manno-octulosonate cytidylyltransferase (266 aa).

It belongs to the KdsB family.

It is found in the cytoplasm. It carries out the reaction 3-deoxy-alpha-D-manno-oct-2-ulosonate + CTP = CMP-3-deoxy-beta-D-manno-octulosonate + diphosphate. Its pathway is nucleotide-sugar biosynthesis; CMP-3-deoxy-D-manno-octulosonate biosynthesis; CMP-3-deoxy-D-manno-octulosonate from 3-deoxy-D-manno-octulosonate and CTP: step 1/1. The protein operates within bacterial outer membrane biogenesis; lipopolysaccharide biosynthesis. Its function is as follows. Activates KDO (a required 8-carbon sugar) for incorporation into bacterial lipopolysaccharide in Gram-negative bacteria. This chain is 3-deoxy-manno-octulosonate cytidylyltransferase, found in Paraburkholderia xenovorans (strain LB400).